Here is a 485-residue protein sequence, read N- to C-terminus: Glycogen synthase (485 aa).

Lys20 contacts ADP-alpha-D-glucose.

It belongs to the glycosyltransferase 1 family. Bacterial/plant glycogen synthase subfamily.

It carries out the reaction [(1-&gt;4)-alpha-D-glucosyl](n) + ADP-alpha-D-glucose = [(1-&gt;4)-alpha-D-glucosyl](n+1) + ADP + H(+). It participates in glycan biosynthesis; glycogen biosynthesis. In terms of biological role, synthesizes alpha-1,4-glucan chains using ADP-glucose. The chain is Glycogen synthase from Vibrio vulnificus (strain CMCP6).